Here is a 162-residue protein sequence, read N- to C-terminus: NADH-quinone oxidoreductase subunit I (162 aa).

2 consecutive 4Fe-4S ferredoxin-type domains span residues 54-83 (RRYE…IESE) and 93-122 (TRYD…ETQI). Residues C63, C66, C69, C73, C102, C105, C108, and C112 each contribute to the [4Fe-4S] cluster site.

Belongs to the complex I 23 kDa subunit family. As to quaternary structure, NDH-1 is composed of 14 different subunits. Subunits NuoA, H, J, K, L, M, N constitute the membrane sector of the complex. The cofactor is [4Fe-4S] cluster.

The protein resides in the cell inner membrane. The enzyme catalyses a quinone + NADH + 5 H(+)(in) = a quinol + NAD(+) + 4 H(+)(out). Functionally, NDH-1 shuttles electrons from NADH, via FMN and iron-sulfur (Fe-S) centers, to quinones in the respiratory chain. The immediate electron acceptor for the enzyme in this species is believed to be ubiquinone. Couples the redox reaction to proton translocation (for every two electrons transferred, four hydrogen ions are translocated across the cytoplasmic membrane), and thus conserves the redox energy in a proton gradient. This is NADH-quinone oxidoreductase subunit I from Burkholderia mallei (strain NCTC 10247).